The following is a 266-amino-acid chain: Nitrate import ATP-binding protein NrtD (266 aa).

Positions 3–234 (LEITDLNRVF…DEETPKNRTY (232 aa)) constitute an ABC transporter domain. 39–46 (GASGSGKS) is an ATP binding site.

Belongs to the ABC transporter superfamily. Nitrate/nitrite/cyanate uptake transporter (NitT) (TC 3.A.1.16) family. In terms of assembly, the complex is composed of two ATP-binding proteins (NrtC and NrtD), two transmembrane proteins (NrtB) and a solute-binding protein (NrtA).

Its subcellular location is the cell inner membrane. The enzyme catalyses nitrate(out) + ATP + H2O = nitrate(in) + ADP + phosphate + H(+). In terms of biological role, part of the ABC transporter complex NrtABCD involved in nitrate uptake. The complex is probably also involved in nitrite transport. Probably responsible for energy coupling to the transport system. This chain is Nitrate import ATP-binding protein NrtD (nrtD), found in Synechocystis sp. (strain ATCC 27184 / PCC 6803 / Kazusa).